A 55-amino-acid chain; its full sequence is MAVPKKRTSISKKRIRKNIWKGKGSWAALKALSLGKSLSTGNSKSFFVRQKKNKS.

This sequence belongs to the bacterial ribosomal protein bL32 family.

Its subcellular location is the plastid. The protein resides in the chloroplast. This chain is Large ribosomal subunit protein bL32c, found in Daucus carota (Wild carrot).